The sequence spans 353 residues: Interferon-stimulated 20 kDa exonuclease-like 2 (353 aa).

Disordered regions lie at residues 1–93 (MSTL…QPLD) and 125–172 (ALPK…SGAS). The span at 14 to 23 (PPKKALEGNA) shows a compositional bias: basic and acidic residues. Basic residues predominate over residues 24–35 (KHRNFVKKRRLL). Residues 54–63 (LHSEPSKKGE) are compositionally biased toward basic and acidic residues. Residues 135–151 (RSQKKSSQKKSSKKNHP) show a composition bias toward basic residues. A compositionally biased stretch (polar residues) spans 152–172 (QKNAPQNSTQAHSENKCSGAS). Residues 178-353 (KMVAIDCEMV…EHLARNPPTD (176 aa)) enclose the Exonuclease domain.

The protein resides in the nucleus. The protein localises to the nucleolus. Functionally, 3'-&gt; 5'-exoribonuclease involved in ribosome biogenesis in the processing of the 12S pre-rRNA. Displays a strong specificity for a 3'-end containing a free hydroxyl group. In Homo sapiens (Human), this protein is Interferon-stimulated 20 kDa exonuclease-like 2 (ISG20L2).